Reading from the N-terminus, the 370-residue chain is Immunoglobulin superfamily member 5 (370 aa).

The N-terminal stretch at 1-24 (MEGSWRDVLAVLVILAQLTASGSS) is a signal peptide. Ig-like V-type domains follow at residues 25–125 (YQII…LSVQ) and 128–215 (GTLN…KSLT). Residues 25 to 239 (YQIIEGPQNV…EEGPALPTWA (215 aa)) are Extracellular-facing. N-linked (GlcNAc...) asparagine glycosylation is found at N33 and N45. The cysteines at positions 46 and 109 are disulfide-linked. N146, N196, and N217 each carry an N-linked (GlcNAc...) asparagine glycan. C149 and C201 are disulfide-bonded. Residues 240–260 (IILLAVAFSLLLILIIVLIII) form a helical membrane-spanning segment. The Cytoplasmic segment spans residues 261 to 370 (FCCCCASRRE…PQKVRNVTLV (110 aa)). Residues 284–359 (ANMRTNKADP…THPRVSFDIA (76 aa)) are disordered. The span at 289–301 (NKADPETKLKGGK) shows a compositional bias: basic and acidic residues.

It belongs to the immunoglobulin superfamily. As to quaternary structure, interacts with MAGI1 at tight junctions, forms a tripartite complex with NPHS1. Interacts with LNX1 isoform 2 via its PDZ 2 domain, it may also interact with other isoforms containing this domain. N-glycosylated. As to expression, localized to kidney glomeruli and small intestinal epithelial cells. In kidney glomeruli, it is localized at slit diaphragm. Also found in spermatogonia, gonocytes, hematopoietic stem cells and Sertoli cells.

The protein localises to the apical cell membrane. It localises to the cell junction. It is found in the tight junction. Its function is as follows. Provides, together with MAGI1, an adhesion machinery at tight junctions, which may regulate the permeability of kidney glomerulus and small intestinal epithelial cells. Mediates calcium-independent homophilic cell adhesion. In testis, it may function as a cell adhesion molecule rather than a tight-junction protein. It may participate in the adhesion between spermatogonia-spermatogonia, spermatogonia-Sertoli cells, and Sertoli cells-Sertoli cells. This is Immunoglobulin superfamily member 5 (Igsf5) from Mus musculus (Mouse).